Reading from the N-terminus, the 229-residue chain is Large ribosomal subunit protein uL1 (229 aa).

The protein belongs to the universal ribosomal protein uL1 family. Part of the 50S ribosomal subunit.

Binds directly to 23S rRNA. The L1 stalk is quite mobile in the ribosome, and is involved in E site tRNA release. Its function is as follows. Protein L1 is also a translational repressor protein, it controls the translation of the L11 operon by binding to its mRNA. This is Large ribosomal subunit protein uL1 from Clostridium botulinum (strain Loch Maree / Type A3).